Here is a 255-residue protein sequence, read N- to C-terminus: 5'-nucleotidase SurE (255 aa).

A divalent metal cation contacts are provided by D8, D9, S40, and N93.

It belongs to the SurE nucleotidase family. The cofactor is a divalent metal cation.

The protein localises to the cytoplasm. The enzyme catalyses a ribonucleoside 5'-phosphate + H2O = a ribonucleoside + phosphate. Nucleotidase that shows phosphatase activity on nucleoside 5'-monophosphates. The sequence is that of 5'-nucleotidase SurE from Bradyrhizobium sp. (strain ORS 278).